A 38-amino-acid polypeptide reads, in one-letter code: Large ribosomal subunit protein bL36 (38 aa).

The protein belongs to the bacterial ribosomal protein bL36 family.

This is Large ribosomal subunit protein bL36 from Paraburkholderia phymatum (strain DSM 17167 / CIP 108236 / LMG 21445 / STM815) (Burkholderia phymatum).